Reading from the N-terminus, the 301-residue chain is Lipoyl synthase (301 aa).

Positions 50, 55, 61, 76, 80, 83, and 289 each coordinate [4Fe-4S] cluster. The Radical SAM core domain occupies tryptophan 62 to arginine 278.

The protein belongs to the radical SAM superfamily. Lipoyl synthase family. The cofactor is [4Fe-4S] cluster.

The protein resides in the cytoplasm. It carries out the reaction [[Fe-S] cluster scaffold protein carrying a second [4Fe-4S](2+) cluster] + N(6)-octanoyl-L-lysyl-[protein] + 2 oxidized [2Fe-2S]-[ferredoxin] + 2 S-adenosyl-L-methionine + 4 H(+) = [[Fe-S] cluster scaffold protein] + N(6)-[(R)-dihydrolipoyl]-L-lysyl-[protein] + 4 Fe(3+) + 2 hydrogen sulfide + 2 5'-deoxyadenosine + 2 L-methionine + 2 reduced [2Fe-2S]-[ferredoxin]. Its pathway is protein modification; protein lipoylation via endogenous pathway; protein N(6)-(lipoyl)lysine from octanoyl-[acyl-carrier-protein]: step 2/2. Catalyzes the radical-mediated insertion of two sulfur atoms into the C-6 and C-8 positions of the octanoyl moiety bound to the lipoyl domains of lipoate-dependent enzymes, thereby converting the octanoylated domains into lipoylated derivatives. The polypeptide is Lipoyl synthase (Roseiflexus sp. (strain RS-1)).